The chain runs to 283 residues: Thymidylate synthase (283 aa).

Arginine 22 serves as a coordination point for dUMP. Cysteine 160 serves as the catalytic Nucleophile. DUMP contacts are provided by residues 180–183 (RSCD), asparagine 191, and 221–223 (HIY). Aspartate 183 contributes to the (6R)-5,10-methylene-5,6,7,8-tetrahydrofolate binding site. Residue serine 282 participates in (6R)-5,10-methylene-5,6,7,8-tetrahydrofolate binding.

Belongs to the thymidylate synthase family. Bacterial-type ThyA subfamily. As to quaternary structure, homodimer.

The protein localises to the cytoplasm. The catalysed reaction is dUMP + (6R)-5,10-methylene-5,6,7,8-tetrahydrofolate = 7,8-dihydrofolate + dTMP. It functions in the pathway pyrimidine metabolism; dTTP biosynthesis. In terms of biological role, catalyzes the reductive methylation of 2'-deoxyuridine-5'-monophosphate (dUMP) to 2'-deoxythymidine-5'-monophosphate (dTMP) while utilizing 5,10-methylenetetrahydrofolate (mTHF) as the methyl donor and reductant in the reaction, yielding dihydrofolate (DHF) as a by-product. This enzymatic reaction provides an intracellular de novo source of dTMP, an essential precursor for DNA biosynthesis. This chain is Thymidylate synthase, found in Haemophilus influenzae (strain PittGG).